The following is a 343-amino-acid chain: DNA-directed RNA polymerase subunit alpha (343 aa).

Residues 1-243 (MTQEIDEKIP…EQLDIFINFD (243 aa)) are alpha N-terminal domain (alpha-NTD). The alpha C-terminal domain (alpha-CTD) stretch occupies residues 261–343 (ENPYLDKPVE…NAPSDAETEE (83 aa)).

This sequence belongs to the RNA polymerase alpha chain family. Homodimer. The RNAP catalytic core consists of 2 alpha, 1 beta, 1 beta' and 1 omega subunit. When a sigma factor is associated with the core the holoenzyme is formed, which can initiate transcription.

It catalyses the reaction RNA(n) + a ribonucleoside 5'-triphosphate = RNA(n+1) + diphosphate. DNA-dependent RNA polymerase catalyzes the transcription of DNA into RNA using the four ribonucleoside triphosphates as substrates. This chain is DNA-directed RNA polymerase subunit alpha, found in Desulfotalea psychrophila (strain LSv54 / DSM 12343).